We begin with the raw amino-acid sequence, 164 residues long: 2-C-methyl-D-erythritol 2,4-cyclodiphosphate synthase (164 aa).

A divalent metal cation is bound by residues Asp9 and His11. 4-CDP-2-C-methyl-D-erythritol 2-phosphate is bound by residues 9 to 11 and 35 to 36; these read DVH and HS. His43 is an a divalent metal cation binding site. 4-CDP-2-C-methyl-D-erythritol 2-phosphate contacts are provided by residues 57 to 59, 62 to 66, 133 to 136, Phe140, and Arg143; these read DIG, FPDTD, and TTTE.

The protein belongs to the IspF family. Homotrimer. The cofactor is a divalent metal cation.

The catalysed reaction is 4-CDP-2-C-methyl-D-erythritol 2-phosphate = 2-C-methyl-D-erythritol 2,4-cyclic diphosphate + CMP. Its pathway is isoprenoid biosynthesis; isopentenyl diphosphate biosynthesis via DXP pathway; isopentenyl diphosphate from 1-deoxy-D-xylulose 5-phosphate: step 4/6. In terms of biological role, involved in the biosynthesis of isopentenyl diphosphate (IPP) and dimethylallyl diphosphate (DMAPP), two major building blocks of isoprenoid compounds. Catalyzes the conversion of 4-diphosphocytidyl-2-C-methyl-D-erythritol 2-phosphate (CDP-ME2P) to 2-C-methyl-D-erythritol 2,4-cyclodiphosphate (ME-CPP) with a corresponding release of cytidine 5-monophosphate (CMP). The sequence is that of 2-C-methyl-D-erythritol 2,4-cyclodiphosphate synthase from Syntrophotalea carbinolica (strain DSM 2380 / NBRC 103641 / GraBd1) (Pelobacter carbinolicus).